A 146-amino-acid chain; its full sequence is Large ribosomal subunit protein uL15 (146 aa).

Residues 1-13 show a composition bias toward basic and acidic residues; it reads MKLHELKPAEGSR. The tract at residues 1–47 is disordered; it reads MKLHELKPAEGSRKSRKRIGRGTGSGLGRNAGKGEKGQKARAGGGVR. Over residues 21 to 31 the composition is skewed to gly residues; that stretch reads RGTGSGLGRNA.

Belongs to the universal ribosomal protein uL15 family. As to quaternary structure, part of the 50S ribosomal subunit.

Binds to the 23S rRNA. The sequence is that of Large ribosomal subunit protein uL15 from Clostridium kluyveri (strain NBRC 12016).